A 298-amino-acid polypeptide reads, in one-letter code: Short-chain dehydrogenase reductase 4 (298 aa).

50–74 (IITGGASGIGAEAVRLFTDHGAKVV) lines the NAD(+) pocket. Substrate is bound at residue serine 182. Tyrosine 195 acts as the Proton acceptor in catalysis.

This sequence belongs to the short-chain dehydrogenases/reductases (SDR) family.

The protein is Short-chain dehydrogenase reductase 4 (SDR4) of Arabidopsis thaliana (Mouse-ear cress).